Here is a 512-residue protein sequence, read N- to C-terminus: Cytoplasmic tRNA 2-thiolation protein 2-B (512 aa).

Positions 196 to 215 (VTDSDSPGSSDKMYQSTCSR) are disordered. The segment covering 199–214 (SDSPGSSDKMYQSTCS) has biased composition (polar residues).

The protein belongs to the CTU2/NCS2 family.

The protein localises to the cytoplasm. It participates in tRNA modification; 5-methoxycarbonylmethyl-2-thiouridine-tRNA biosynthesis. Its function is as follows. Plays a central role in 2-thiolation of mcm(5)S(2)U at tRNA wobble positions of tRNA(Lys), tRNA(Glu) and tRNA(Gln). May act by forming a heterodimer with ctu1/atpbd3 that ligates sulfur from thiocarboxylated urm1 onto the uridine of tRNAs at wobble position. This Xenopus laevis (African clawed frog) protein is Cytoplasmic tRNA 2-thiolation protein 2-B (ctu2-b).